The following is a 94-amino-acid chain: uncharacterized protein (94 aa).

The region spanning 13 to 67 is the HTH cro/C1-type domain; the sequence is IQESLDELNVSLREFARAMEIAPSTASRLLTGKAALTPEMAIKLSVVIGSSPQMW. The segment at residues 24-43 is a DNA-binding region (H-T-H motif); sequence LREFARAMEIAPSTASRLLT.

Belongs to the VapA/VapI family.

This is an uncharacterized protein from Escherichia coli (strain K12).